The following is a 408-amino-acid chain: 3-phosphoshikimate 1-carboxyvinyltransferase (408 aa).

3-phosphoshikimate-binding residues include lysine 10, serine 11, and arginine 15. Residue lysine 10 participates in phosphoenolpyruvate binding. Phosphoenolpyruvate-binding residues include glycine 79 and arginine 107. Residues serine 150, serine 151, glutamine 152, serine 179, glutamate 297, and histidine 324 each contribute to the 3-phosphoshikimate site. A phosphoenolpyruvate-binding site is contributed by glutamine 152. Glutamate 297 serves as the catalytic Proton acceptor. Phosphoenolpyruvate-binding residues include arginine 328, arginine 369, and lysine 394.

It belongs to the EPSP synthase family. As to quaternary structure, monomer.

It is found in the cytoplasm. It carries out the reaction 3-phosphoshikimate + phosphoenolpyruvate = 5-O-(1-carboxyvinyl)-3-phosphoshikimate + phosphate. It participates in metabolic intermediate biosynthesis; chorismate biosynthesis; chorismate from D-erythrose 4-phosphate and phosphoenolpyruvate: step 6/7. Its function is as follows. Catalyzes the transfer of the enolpyruvyl moiety of phosphoenolpyruvate (PEP) to the 5-hydroxyl of shikimate-3-phosphate (S3P) to produce enolpyruvyl shikimate-3-phosphate and inorganic phosphate. This is 3-phosphoshikimate 1-carboxyvinyltransferase from Corynebacterium efficiens (strain DSM 44549 / YS-314 / AJ 12310 / JCM 11189 / NBRC 100395).